A 191-amino-acid chain; its full sequence is ADP-ribosylation factor (191 aa).

A lipid anchor (N-myristoyl glycine) is attached at G2. Residues 24-31 (GLDAAGKT), 67-71 (DVGGQ), and 128-131 (NKQD) each bind GTP.

This sequence belongs to the small GTPase superfamily. Arf family.

It is found in the golgi apparatus. GTP-binding protein involved in protein trafficking; may modulate vesicle budding and uncoating within the Golgi apparatus. The protein is ADP-ribosylation factor of Giardia intestinalis (Giardia lamblia).